We begin with the raw amino-acid sequence, 1012 residues long: DNA polymerase catalytic subunit (1012 aa).

A disordered region spans residues 1-31 (MDFFNPFIDPTRGGPRNTVRQPTPSQSPTVP). Residues 21–31 (QPTPSQSPTVP) show a composition bias toward low complexity.

The protein belongs to the DNA polymerase type-B family. In terms of assembly, forms a complex with the ssDNA-binding protein, the DNA polymerase processivity factor, and the alkaline exonuclease. Interacts with the putative helicase-primase complex subunit; this interaction may coordinate leading and lagging strand DNA synthesis at the replication fork.

It localises to the host nucleus. The enzyme catalyses DNA(n) + a 2'-deoxyribonucleoside 5'-triphosphate = DNA(n+1) + diphosphate. It catalyses the reaction Endonucleolytic cleavage to 5'-phosphomonoester.. Replicates viral genomic DNA. The replication complex is composed of six viral proteins: the DNA polymerase, processivity factor, primase, primase-associated factor, helicase, and ssDNA-binding protein. Additionally, the polymerase contains an intrinsic ribonuclease H (RNase H) activity that specifically degrades RNA/DNA heteroduplexes or duplex DNA substrates in the 5' to 3' direction. Therefore, it can catalyze the excision of the RNA primers that initiate the synthesis of Okazaki fragments at a replication fork during viral DNA replication. The protein is DNA polymerase catalytic subunit (ORF9) of Human herpesvirus 8 type P (isolate GK18) (HHV-8).